The sequence spans 544 residues: Chaperonin GroEL (544 aa).

Residues 29–32 (TIGP), 86–90 (DGTTT), Gly-413, 478–480 (NAA), and Asp-494 contribute to the ATP site.

Belongs to the chaperonin (HSP60) family. In terms of assembly, forms a cylinder of 14 subunits composed of two heptameric rings stacked back-to-back. Interacts with the co-chaperonin GroES.

Its subcellular location is the cytoplasm. It carries out the reaction ATP + H2O + a folded polypeptide = ADP + phosphate + an unfolded polypeptide.. Its function is as follows. Together with its co-chaperonin GroES, plays an essential role in assisting protein folding. The GroEL-GroES system forms a nano-cage that allows encapsulation of the non-native substrate proteins and provides a physical environment optimized to promote and accelerate protein folding. This chain is Chaperonin GroEL, found in Exiguobacterium sp. (strain ATCC BAA-1283 / AT1b).